A 110-amino-acid polypeptide reads, in one-letter code: UPF0060 membrane protein PBPRB0495 (110 aa).

4 helical membrane-spanning segments follow: residues 7 to 27 (VGLFFITAIAEIIGCYLPYLW), 33 to 53 (TIWLLIPAAISLALFAWLLTL), 63 to 83 (AAYGGVYIFTAILWLWLVDGI), and 85 to 105 (PTVWDFVGVFVALLGMAIIMF).

It belongs to the UPF0060 family.

It localises to the cell inner membrane. The polypeptide is UPF0060 membrane protein PBPRB0495 (Photobacterium profundum (strain SS9)).